Consider the following 217-residue polypeptide: 3-demethoxyubiquinol 3-hydroxylase (217 aa).

Fe cation contacts are provided by E66, E96, H99, E148, E180, and H183.

It belongs to the COQ7 family. Fe cation is required as a cofactor.

The protein localises to the cell membrane. It catalyses the reaction a 5-methoxy-2-methyl-3-(all-trans-polyprenyl)benzene-1,4-diol + AH2 + O2 = a 3-demethylubiquinol + A + H2O. It functions in the pathway cofactor biosynthesis; ubiquinone biosynthesis. Functionally, catalyzes the hydroxylation of 2-nonaprenyl-3-methyl-6-methoxy-1,4-benzoquinol during ubiquinone biosynthesis. The sequence is that of 3-demethoxyubiquinol 3-hydroxylase from Xanthomonas campestris pv. campestris (strain 8004).